Here is a 440-residue protein sequence, read N- to C-terminus: uncharacterized protein (440 aa).

The next 10 membrane-spanning stretches (helical) occupy residues 1-21, 29-49, 70-90, 101-121, 179-199, 226-246, 258-278, 343-363, 366-386, and 389-409; these read MLLV…QLYR, TVFI…SAFE, LLQM…IARI, VGVL…GIAM, TSII…LSLG, FVIR…AATS, IVAS…LLFF, IYPA…PFSF, ILTL…VGGG, and FAAI…GLLI.

The protein belongs to the dicarboxylate/amino acid:cation symporter (DAACS) (TC 2.A.23) family.

It localises to the cell membrane. This is an uncharacterized protein from Haemophilus influenzae (strain ATCC 51907 / DSM 11121 / KW20 / Rd).